A 118-amino-acid chain; its full sequence is NADH-quinone oxidoreductase subunit A (118 aa).

A run of 3 helical transmembrane segments spans residues 6 to 26 (LPVL…LLMG), 64 to 84 (AILF…AVVF), and 87 to 107 (IGMT…VGFI).

Belongs to the complex I subunit 3 family. NDH-1 is composed of 14 different subunits. Subunits NuoA, H, J, K, L, M, N constitute the membrane sector of the complex.

It is found in the cell inner membrane. It carries out the reaction a quinone + NADH + 5 H(+)(in) = a quinol + NAD(+) + 4 H(+)(out). Functionally, NDH-1 shuttles electrons from NADH, via FMN and iron-sulfur (Fe-S) centers, to quinones in the respiratory chain. The immediate electron acceptor for the enzyme in this species is believed to be ubiquinone. Couples the redox reaction to proton translocation (for every two electrons transferred, four hydrogen ions are translocated across the cytoplasmic membrane), and thus conserves the redox energy in a proton gradient. This Acidithiobacillus ferrooxidans (strain ATCC 53993 / BNL-5-31) (Leptospirillum ferrooxidans (ATCC 53993)) protein is NADH-quinone oxidoreductase subunit A.